The primary structure comprises 111 residues: Large ribosomal subunit protein uL24 (111 aa).

The segment at Thr-43–Lys-62 is disordered.

The protein belongs to the universal ribosomal protein uL24 family. In terms of assembly, part of the 50S ribosomal subunit.

In terms of biological role, one of two assembly initiator proteins, it binds directly to the 5'-end of the 23S rRNA, where it nucleates assembly of the 50S subunit. One of the proteins that surrounds the polypeptide exit tunnel on the outside of the subunit. The sequence is that of Large ribosomal subunit protein uL24 from Mycoplasma pneumoniae (strain ATCC 29342 / M129 / Subtype 1) (Mycoplasmoides pneumoniae).